Here is an 89-residue protein sequence, read N- to C-terminus: Probable Fe(2+)-trafficking protein (89 aa).

Belongs to the Fe(2+)-trafficking protein family.

Functionally, could be a mediator in iron transactions between iron acquisition and iron-requiring processes, such as synthesis and/or repair of Fe-S clusters in biosynthetic enzymes. This is Probable Fe(2+)-trafficking protein from Legionella pneumophila (strain Lens).